The following is a 592-amino-acid chain: Cytosolic purine 5'-nucleotidase (592 aa).

A compositionally biased stretch (low complexity) spans 1–15 (MAENNNNNNNNNNNN). The tract at residues 1–37 (MAENNNNNNNNNNNNVSTPPHQKPHLTTGLRTSSSGL) is disordered. Catalysis depends on D122, which acts as the Nucleophile. The IMP site is built by D122 and D124. Mg(2+)-binding residues include D122 and D124. The Proton donor role is filled by D124. N226 contributes to the ATP binding site. The interval 252–273 (LTEEVADEQQQMNSPPLSSLGS) is disordered. Over residues 259–273 (EQQQMNSPPLSSLGS) the composition is skewed to polar residues. IMP-binding residues include R299, D303, K312, T347, N348, S349, and K385. D444 contacts Mg(2+). ATP contacts are provided by Q547 and R550.

It belongs to the 5'(3')-deoxyribonucleotidase family. In terms of assembly, homotetramer. The cofactor is Mg(2+).

The protein localises to the cytoplasm. It localises to the cytosol. It carries out the reaction a ribonucleoside 5'-phosphate + H2O = a ribonucleoside + phosphate. It catalyses the reaction a 2'-deoxyribonucleoside + a ribonucleoside 5'-phosphate = a ribonucleoside + a 2'-deoxyribonucleoside 5'-phosphate. Broad specificity cytosolic 5'-nucleotidase that catalyzes the dephosphorylation of 6-hydroxypurine nucleoside 5'-monophosphates. In addition, possesses a phosphotransferase activity by which it can transfer a phosphate from a donor nucleoside monophosphate to an acceptor nucleoside. Through these activities regulates the purine nucleoside/nucleotide pools within the cell. The polypeptide is Cytosolic purine 5'-nucleotidase (nt5c2) (Dictyostelium discoideum (Social amoeba)).